The sequence spans 535 residues: CTP synthase (535 aa).

Residues 1 to 267 (MTKYIFVTGG…DKLVCEHMKL (267 aa)) are amidoligase domain. Ser13 is a CTP binding site. Ser13 is a binding site for UTP. 14-19 (SLGKGI) provides a ligand contact to ATP. Tyr54 lines the L-glutamine pocket. Asp71 is a binding site for ATP. Residues Asp71 and Glu141 each coordinate Mg(2+). CTP is bound by residues 148–150 (DIE), 188–193 (KTKPTQ), and Lys224. UTP-binding positions include 188 to 193 (KTKPTQ) and Lys224. Positions 292 to 534 (TIGLVGKYVE…IGASVEAANQ (243 aa)) constitute a Glutamine amidotransferase type-1 domain. Gly354 is an L-glutamine binding site. Cys381 serves as the catalytic Nucleophile; for glutamine hydrolysis. Residues 382 to 385 (LGMQ), Glu405, and Arg462 contribute to the L-glutamine site. Catalysis depends on residues His507 and Glu509.

This sequence belongs to the CTP synthase family. In terms of assembly, homotetramer. Interacts with BrxC.

It catalyses the reaction UTP + L-glutamine + ATP + H2O = CTP + L-glutamate + ADP + phosphate + 2 H(+). It carries out the reaction L-glutamine + H2O = L-glutamate + NH4(+). The catalysed reaction is UTP + NH4(+) + ATP = CTP + ADP + phosphate + 2 H(+). It participates in pyrimidine metabolism; CTP biosynthesis via de novo pathway; CTP from UDP: step 2/2. Allosterically activated by GTP, when glutamine is the substrate; GTP has no effect on the reaction when ammonia is the substrate. The allosteric effector GTP functions by stabilizing the protein conformation that binds the tetrahedral intermediate(s) formed during glutamine hydrolysis. Inhibited by the product CTP, via allosteric rather than competitive inhibition. Its function is as follows. Catalyzes the ATP-dependent amination of UTP to CTP with either L-glutamine or ammonia as the source of nitrogen. Regulates intracellular CTP levels through interactions with the four ribonucleotide triphosphates. The sequence is that of CTP synthase from Bacillus subtilis (strain 168).